The primary structure comprises 342 residues: Heat-inducible transcription repressor HrcA (342 aa).

The protein belongs to the HrcA family.

Negative regulator of class I heat shock genes (grpE-dnaK-dnaJ and groELS operons). Prevents heat-shock induction of these operons. The chain is Heat-inducible transcription repressor HrcA from Methylibium petroleiphilum (strain ATCC BAA-1232 / LMG 22953 / PM1).